Here is a 375-residue protein sequence, read N- to C-terminus: Alcohol dehydrogenase 1A (375 aa).

Gly1 carries the N-acetylglycine modification. Residues Cys46, His67, Cys97, Cys100, Cys103, Cys111, and Cys174 each contribute to the Zn(2+) site. Residues 199 to 204, Asp223, Lys228, 293 to 295, and Arg370 each bind NAD(+); these read GLGGVG and VGL.

The protein belongs to the zinc-containing alcohol dehydrogenase family. Class-I subfamily. In terms of assembly, multimeric (with different ratios of monomers). It depends on Zn(2+) as a cofactor.

It localises to the cytoplasm. The catalysed reaction is a primary alcohol + NAD(+) = an aldehyde + NADH + H(+). It catalyses the reaction a secondary alcohol + NAD(+) = a ketone + NADH + H(+). This is Alcohol dehydrogenase 1A from Saara hardwickii (Indian spiny-tailed lizard).